Reading from the N-terminus, the 590-residue chain is Arginine--tRNA ligase (590 aa).

Positions 138–148 (ANPTGPLHIGH) match the 'HIGH' region motif.

It belongs to the class-I aminoacyl-tRNA synthetase family. Monomer.

It localises to the cytoplasm. The enzyme catalyses tRNA(Arg) + L-arginine + ATP = L-arginyl-tRNA(Arg) + AMP + diphosphate. The sequence is that of Arginine--tRNA ligase from Orientia tsutsugamushi (strain Ikeda) (Rickettsia tsutsugamushi).